Consider the following 82-residue polypeptide: Sulfur carrier protein TusA (82 aa).

Cys-19 functions as the Cysteine persulfide intermediate in the catalytic mechanism.

This sequence belongs to the sulfur carrier protein TusA family.

It localises to the cytoplasm. Its function is as follows. Sulfur carrier protein which probably makes part of a sulfur-relay system. The polypeptide is Sulfur carrier protein TusA (Vibrio campbellii (strain ATCC BAA-1116)).